The primary structure comprises 235 residues: Claudin-16 (235 aa).

At 1 to 3 the chain is on the cytoplasmic side; sequence MKD. A helical transmembrane segment spans residues 4–24; sequence LLQYAACFLAIFSTGFLIVAT. Residues 25–79 are Extracellular-facing; the sequence is WTDCWMVNADDSLEVSTKCRGLWWECVTNAFDGIRTCDEYDSIYAEHPLKLVVTR. A helical membrane pass occupies residues 80–100; sequence ALMITADILAGFGFITLLLGL. Residues 101 to 115 are Cytoplasmic-facing; that stretch reads DCVKFLPDDPQIKVR. A helical transmembrane segment spans residues 116–136; it reads LCFVAGTTLLIAGTPGIIGSV. At 137-169 the chain is on the extracellular side; that stretch reads WYAVDVYVERSSLVLHNIFLGIQYKFGWSCWLG. Residues 170–190 traverse the membrane as a helical segment; it reads MAGSLGCFLAGALLTCCLYLF. The Cytoplasmic segment spans residues 191-235; it reads KDVGPERNYPYAMRKPYSTAGVSMAKSYKAPRTETAKMYAVDTRV. The Interaction with TJP1 signature appears at 233–235; it reads TRV.

Belongs to the claudin family. As to quaternary structure, can form heteropolymeric tight junction strands with other claudins. Interacts with CLDN19. Cannot form tight junction strands on its own. Interacts (via PDZ-binding motif TRV) with TJP1 (via PDZ domain). As to expression, expressed in the corticomedullary axis of the TAL, specifically in the cortex and the outer stripe of outer medulla (OSOM) zone (at protein level).

It is found in the cell junction. Its subcellular location is the tight junction. The protein localises to the cell membrane. It carries out the reaction Mg(2+)(in) = Mg(2+)(out). It catalyses the reaction Ca(2+)(in) = Ca(2+)(out). The catalysed reaction is Na(+)(in) = Na(+)(out). The enzyme catalyses K(+)(in) = K(+)(out). It carries out the reaction Rb(+)(in) = Rb(+)(out). It catalyses the reaction Cs(+)(in) = Cs(+)(out). The catalysed reaction is Li(+)(in) = Li(+)(out). In terms of biological role, forms paracellular channels: coassembles with CLDN19 into tight junction strands with cation-selective channels through the strands, conveying epithelial permeability in a process known as paracellular tight junction permeability. Involved in the maintenance of ion gradients along the nephron. In the thick ascending limb (TAL) of Henle's loop, facilitates sodium paracellular permeability from the interstitial compartment to the lumen, contributing to the lumen-positive transepithelial potential that drives paracellular magnesium and calcium reabsorption. This chain is Claudin-16, found in Mus musculus (Mouse).